The chain runs to 284 residues: MSDIVYANVSHYNKIEASKYDNPSTLAISKVISSKILQFEDNSETSLRHDLPKYDQDRLLLTSDDDLTNVNNFWKKSGMSILDFACGTGLISQHLFPYCKQIVGIDVSQDMVDVYNEKFRKMNIPKERACAYVLSLDDLDGNGDEPFSTEFDAVVCSMAYHHIKDLQEVTNKLSKLLKPNGRLFVADLIKGGDTFHGNLHPDEIAKLGVAHHGGFTPQSILNLFKNASLSNAEVIGKAQANVWVDEAKYQRSTQSKDAKTLDLANGEKLYEVKLQLMVISGIKT.

The protein belongs to the methyltransferase superfamily.

The protein resides in the cytoplasm. Its subcellular location is the nucleus. Its function is as follows. Probable methyltransferase. This is an uncharacterized protein from Schizosaccharomyces pombe (strain 972 / ATCC 24843) (Fission yeast).